We begin with the raw amino-acid sequence, 415 residues long: Adenylosuccinate synthetase (415 aa).

GTP is bound by residues G11–K17 and G39–T41. D12 (proton acceptor) is an active-site residue. D12 and G39 together coordinate Mg(2+). Residues D12 to K15, N37 to H40, T124, R138, Q218, T233, and R297 each bind IMP. The active-site Proton donor is H40. T293–R299 provides a ligand contact to substrate. Residues R299, K325–D327, and S403–S405 contribute to the GTP site.

Belongs to the adenylosuccinate synthetase family. Homodimer. It depends on Mg(2+) as a cofactor.

It localises to the cytoplasm. The enzyme catalyses IMP + L-aspartate + GTP = N(6)-(1,2-dicarboxyethyl)-AMP + GDP + phosphate + 2 H(+). The protein operates within purine metabolism; AMP biosynthesis via de novo pathway; AMP from IMP: step 1/2. Plays an important role in the de novo pathway of purine nucleotide biosynthesis. Catalyzes the first committed step in the biosynthesis of AMP from IMP. This Helicobacter hepaticus (strain ATCC 51449 / 3B1) protein is Adenylosuccinate synthetase.